The primary structure comprises 344 residues: tRNA N6-adenosine threonylcarbamoyltransferase (344 aa).

Fe cation is bound by residues histidine 115 and histidine 119. Substrate is bound by residues 137 to 141 (LVSGG), aspartate 170, glycine 183, aspartate 187, and asparagine 276. Position 306 (aspartate 306) interacts with Fe cation.

It belongs to the KAE1 / TsaD family. Requires Fe(2+) as cofactor.

The protein localises to the cytoplasm. It catalyses the reaction L-threonylcarbamoyladenylate + adenosine(37) in tRNA = N(6)-L-threonylcarbamoyladenosine(37) in tRNA + AMP + H(+). In terms of biological role, required for the formation of a threonylcarbamoyl group on adenosine at position 37 (t(6)A37) in tRNAs that read codons beginning with adenine. Is involved in the transfer of the threonylcarbamoyl moiety of threonylcarbamoyl-AMP (TC-AMP) to the N6 group of A37, together with TsaE and TsaB. TsaD likely plays a direct catalytic role in this reaction. The protein is tRNA N6-adenosine threonylcarbamoyltransferase of Limosilactobacillus fermentum (strain NBRC 3956 / LMG 18251) (Lactobacillus fermentum).